Reading from the N-terminus, the 422-residue chain is Enolase (422 aa).

Gln161 is a (2R)-2-phosphoglycerate binding site. The active-site Proton donor is Glu203. Mg(2+)-binding residues include Asp240, Glu283, and Asp310. The (2R)-2-phosphoglycerate site is built by Lys335, Arg364, Ser365, and Lys386. Lys335 acts as the Proton acceptor in catalysis.

Belongs to the enolase family. It depends on Mg(2+) as a cofactor.

It localises to the cytoplasm. The protein resides in the secreted. The protein localises to the cell surface. It catalyses the reaction (2R)-2-phosphoglycerate = phosphoenolpyruvate + H2O. It functions in the pathway carbohydrate degradation; glycolysis; pyruvate from D-glyceraldehyde 3-phosphate: step 4/5. Its function is as follows. Catalyzes the reversible conversion of 2-phosphoglycerate (2-PG) into phosphoenolpyruvate (PEP). It is essential for the degradation of carbohydrates via glycolysis. This is Enolase from Deinococcus deserti (strain DSM 17065 / CIP 109153 / LMG 22923 / VCD115).